The primary structure comprises 257 residues: NAD-capped RNA hydrolase NudC (257 aa).

2 residues coordinate substrate: lysine 25 and arginine 69. Zn(2+) contacts are provided by cysteine 98 and cysteine 101. Glutamate 111 is a binding site for substrate. Residues cysteine 116 and cysteine 119 each coordinate Zn(2+). Tyrosine 124 serves as a coordination point for substrate. The Nudix hydrolase domain occupies 125 to 248; the sequence is PQIAPCIIVA…TVARRLIEDT (124 aa). Positions 158, 174, and 178 each coordinate a divalent metal cation. Positions 159-180 match the Nudix box motif; the sequence is GFVEVGETLEQAVAREVMEESG. Position 192 to 199 (192 to 199) interacts with substrate; that stretch reads QPWPFPQS. Position 219 (glutamate 219) interacts with a divalent metal cation. Alanine 241 is a binding site for substrate.

Belongs to the Nudix hydrolase family. NudC subfamily. In terms of assembly, homodimer. Mg(2+) is required as a cofactor. It depends on Mn(2+) as a cofactor. Requires Zn(2+) as cofactor.

It carries out the reaction a 5'-end NAD(+)-phospho-ribonucleoside in mRNA + H2O = a 5'-end phospho-adenosine-phospho-ribonucleoside in mRNA + beta-nicotinamide D-ribonucleotide + 2 H(+). It catalyses the reaction NAD(+) + H2O = beta-nicotinamide D-ribonucleotide + AMP + 2 H(+). The catalysed reaction is NADH + H2O = reduced beta-nicotinamide D-ribonucleotide + AMP + 2 H(+). Its function is as follows. mRNA decapping enzyme that specifically removes the nicotinamide adenine dinucleotide (NAD) cap from a subset of mRNAs by hydrolyzing the diphosphate linkage to produce nicotinamide mononucleotide (NMN) and 5' monophosphate mRNA. The NAD-cap is present at the 5'-end of some mRNAs and stabilizes RNA against 5'-processing. Has preference for mRNAs with a 5'-end purine. Catalyzes the hydrolysis of a broad range of dinucleotide pyrophosphates. The sequence is that of NAD-capped RNA hydrolase NudC from Escherichia coli O127:H6 (strain E2348/69 / EPEC).